We begin with the raw amino-acid sequence, 545 residues long: Chaperonin GroEL (545 aa).

ATP-binding positions include 30–33, K51, 87–91, G415, and D495; these read TLGP and DGTTT.

Belongs to the chaperonin (HSP60) family. Forms a cylinder of 14 subunits composed of two heptameric rings stacked back-to-back. Interacts with the co-chaperonin GroES.

It is found in the cytoplasm. The enzyme catalyses ATP + H2O + a folded polypeptide = ADP + phosphate + an unfolded polypeptide.. Together with its co-chaperonin GroES, plays an essential role in assisting protein folding. The GroEL-GroES system forms a nano-cage that allows encapsulation of the non-native substrate proteins and provides a physical environment optimized to promote and accelerate protein folding. This Shewanella sp. (strain W3-18-1) protein is Chaperonin GroEL.